Reading from the N-terminus, the 786-residue chain is Pentatricopeptide repeat-containing protein At2g22070 (786 aa).

PPR repeat units lie at residues 48–78 (SVYL…MPLR), 79–109 (TAFS…LPQR), 110–144 (DSVS…GIEP), 145–179 (TQFT…GLRG), 180–214 (NVSV…DISS), 215–241 (WNAM…MAER), 242–276 (DIVT…SLLS), 278–312 (DRFT…GFDI), 313–347 (SGIV…DLKI), 350–376 (FTAL…LKDR), 377–411 (DVVA…GQRP), 412–446 (NSYT…GEIY), 447–477 (SVSV…IRCE), 479–513 (DTVS…GLRP), 514–548 (DHIT…DKII), and 550–580 (TLSH…MPIE). The tract at residues 585 to 660 (TWGSLLSACR…EQGFSWIEVK (76 aa)) is type E motif. Residues 661–691 (HKVHVFGVEDGTHPEKNEIYMTMKKIWDEIK) form a type E(+) motif region. Residues 692 to 786 (KMGYVPDTAS…DGFCSCRDYW (95 aa)) form a type DYW motif region.

Belongs to the PPR family. PCMP-H subfamily.

The polypeptide is Pentatricopeptide repeat-containing protein At2g22070 (PCMP-H41) (Arabidopsis thaliana (Mouse-ear cress)).